The primary structure comprises 311 residues: Putative prophage capsid protein YqbE (311 aa).

Belongs to the encapsulin family. Family 3 subfamily.

In terms of biological role, possibly a prophage capsid protein. The sequence is that of Putative prophage capsid protein YqbE (yqbE) from Bacillus subtilis (strain 168).